The chain runs to 137 residues: Leaf-specific thionin DB4 (137 aa).

The signal sequence occupies residues 1-28; the sequence is MAPSKSIKSVVICVLILGLVLEQVQVEG. 4 disulfide bridges follow: C31–C68, C32–C60, C40–C58, and C44–C54. The propeptide at 75–137 is acidic domain; sequence LNLLPESGEP…DGAVIQSVEA (63 aa).

Belongs to the plant thionin (TC 1.C.44) family. 4 C-C subfamily.

The protein localises to the secreted. Functionally, thionins are small plant proteins which are toxic to animal cells. They seem to exert their toxic effect at the level of the cell membrane. Their precise function is not known. The protein is Leaf-specific thionin DB4 (THI1.3) of Hordeum vulgare (Barley).